Consider the following 326-residue polypeptide: dTDP-4-dehydro-6-deoxy-D-allose reductase (326 aa).

Residues 15–21 (GALGFIG) and 129–132 (MSSS) contribute to the NADP(+) site. Residue Tyr160 is the Proton donor/acceptor of the active site. Residues Lys164 and 187 to 190 (PGNV) each bind NADP(+).

It belongs to the NAD(P)-dependent epimerase/dehydratase family.

The catalysed reaction is dTDP-6-deoxy-alpha-D-allose + NAD(+) = dTDP-4-dehydro-6-deoxy-alpha-D-allose + NADH + H(+). It carries out the reaction dTDP-6-deoxy-alpha-D-allose + NADP(+) = dTDP-4-dehydro-6-deoxy-alpha-D-allose + NADPH + H(+). In terms of biological role, catalyzes the stereospecific reduction of the C-4 keto group of dTDP-4-dehydro-6-deoxy-D-allose, leading to dTDP-6-deoxy-D-allose, an intermediate in the biosynthesis of the mycinose moiety of the chalcomycin antibiotic. In Streptomyces bikiniensis, this protein is dTDP-4-dehydro-6-deoxy-D-allose reductase (chmD).